Here is a 329-residue protein sequence, read N- to C-terminus: MQEMLEQLLTPRLVDIKTVNGFNSRVTLEPLERGFGHTLGNALRRILLSSMPGAAIVEAQIDGVLHEYSAIEGVREDVLEIMLNLKEVAIKLNETSEAELTLSKKGPAVVTAADIQLNHDTEIMNPDLVIAHLGEGAELSMKLKVEKGIGYRAAVQSSDSESANIGVLKLDASFSPVKTVSYEVQNARVEQRTDLDKLILNVVTDGTLDPEDAIKQAATVLHYQLIAFVDLKHKEIVVQEEEENEFDPIFLQPVDDLELTVRSANCLKAEQIYYIGDLVQRAESSLLKTPNLGKKSLQEIKDVLAQRGLGLGTKLENWPPSSLVSKESA.

Residues 1-232 (MQEMLEQLLT…YQLIAFVDLK (232 aa)) form an alpha N-terminal domain (alpha-NTD) region. Positions 246–329 (FDPIFLQPVD…PSSLVSKESA (84 aa)) are alpha C-terminal domain (alpha-CTD).

The protein belongs to the RNA polymerase alpha chain family. Homodimer. The RNAP catalytic core consists of 2 alpha, 1 beta, 1 beta' and 1 omega subunit. When a sigma factor is associated with the core the holoenzyme is formed, which can initiate transcription.

The catalysed reaction is RNA(n) + a ribonucleoside 5'-triphosphate = RNA(n+1) + diphosphate. Functionally, DNA-dependent RNA polymerase catalyzes the transcription of DNA into RNA using the four ribonucleoside triphosphates as substrates. In Hydrogenovibrio crunogenus (strain DSM 25203 / XCL-2) (Thiomicrospira crunogena), this protein is DNA-directed RNA polymerase subunit alpha.